The following is a 344-amino-acid chain: Acireductone dioxygenase (344 aa).

4 residues coordinate Fe(2+): His-92, His-94, Glu-98, and His-137. His-92, His-94, Glu-98, and His-137 together coordinate Ni(2+).

This sequence belongs to the acireductone dioxygenase (ARD) family. Fe(2+) is required as a cofactor. Ni(2+) serves as cofactor.

The protein resides in the cytoplasm. It is found in the nucleus. It catalyses the reaction 1,2-dihydroxy-5-(methylsulfanyl)pent-1-en-3-one + O2 = 4-methylsulfanyl-2-oxobutanoate + formate + 2 H(+). The enzyme catalyses 1,2-dihydroxy-5-(methylsulfanyl)pent-1-en-3-one + O2 = 3-(methylsulfanyl)propanoate + CO + formate + 2 H(+). Its pathway is amino-acid biosynthesis; L-methionine biosynthesis via salvage pathway; L-methionine from S-methyl-5-thio-alpha-D-ribose 1-phosphate: step 5/6. Catalyzes 2 different reactions between oxygen and the acireductone 1,2-dihydroxy-3-keto-5-methylthiopentene (DHK-MTPene) depending upon the metal bound in the active site. Fe-containing acireductone dioxygenase (Fe-ARD) produces formate and 2-keto-4-methylthiobutyrate (KMTB), the alpha-ketoacid precursor of methionine in the methionine recycle pathway. Ni-containing acireductone dioxygenase (Ni-ARD) produces methylthiopropionate, carbon monoxide and formate, and does not lie on the methionine recycle pathway. This is Acireductone dioxygenase from Leishmania infantum.